A 101-amino-acid polypeptide reads, in one-letter code: Small ribosomal subunit protein bS18c (101 aa).

Belongs to the bacterial ribosomal protein bS18 family. In terms of assembly, part of the 30S ribosomal subunit.

It localises to the plastid. It is found in the chloroplast. The sequence is that of Small ribosomal subunit protein bS18c from Lactuca sativa (Garden lettuce).